We begin with the raw amino-acid sequence, 208 residues long: Superoxide dismutase [Mn] 2 (208 aa).

Positions 28, 83, 165, and 169 each coordinate Mn(2+).

It belongs to the iron/manganese superoxide dismutase family. Homodimer. Mn(2+) serves as cofactor.

It carries out the reaction 2 superoxide + 2 H(+) = H2O2 + O2. Functionally, destroys superoxide anion radicals which are normally produced within the cells and which are toxic to biological systems. This chain is Superoxide dismutase [Mn] 2 (sodA2), found in Bacillus cereus (strain ATCC 14579 / DSM 31 / CCUG 7414 / JCM 2152 / NBRC 15305 / NCIMB 9373 / NCTC 2599 / NRRL B-3711).